A 184-amino-acid chain; its full sequence is ATP synthase subunit b, chloroplastic (184 aa).

A helical transmembrane segment spans residues 27-49 (LATNPINLSVVLGVLIFFGKGVL).

This sequence belongs to the ATPase B chain family. As to quaternary structure, F-type ATPases have 2 components, F(1) - the catalytic core - and F(0) - the membrane proton channel. F(1) has five subunits: alpha(3), beta(3), gamma(1), delta(1), epsilon(1). F(0) has four main subunits: a(1), b(1), b'(1) and c(10-14). The alpha and beta chains form an alternating ring which encloses part of the gamma chain. F(1) is attached to F(0) by a central stalk formed by the gamma and epsilon chains, while a peripheral stalk is formed by the delta, b and b' chains.

It is found in the plastid. Its subcellular location is the chloroplast thylakoid membrane. Its function is as follows. F(1)F(0) ATP synthase produces ATP from ADP in the presence of a proton or sodium gradient. F-type ATPases consist of two structural domains, F(1) containing the extramembraneous catalytic core and F(0) containing the membrane proton channel, linked together by a central stalk and a peripheral stalk. During catalysis, ATP synthesis in the catalytic domain of F(1) is coupled via a rotary mechanism of the central stalk subunits to proton translocation. In terms of biological role, component of the F(0) channel, it forms part of the peripheral stalk, linking F(1) to F(0). This Nicotiana sylvestris (Wood tobacco) protein is ATP synthase subunit b, chloroplastic.